A 338-amino-acid polypeptide reads, in one-letter code: Ketol-acid reductoisomerase (NADP(+)) (338 aa).

One can recognise a KARI N-terminal Rossmann domain in the interval 1–181 (MKVFYDKDAD…GGGRAGIIET (181 aa)). NADP(+) contacts are provided by residues 24–27 (YGSQ), Arg-47, and Ser-52. His-107 is an active-site residue. Gly-133 lines the NADP(+) pocket. The KARI C-terminal knotted domain maps to 182 to 327 (NFREETETDL…AKLRAMMPWI (146 aa)). Mg(2+) is bound by residues Asp-190, Glu-194, Glu-226, and Glu-230. Ser-251 contributes to the substrate binding site.

It belongs to the ketol-acid reductoisomerase family. Mg(2+) is required as a cofactor.

The enzyme catalyses (2R)-2,3-dihydroxy-3-methylbutanoate + NADP(+) = (2S)-2-acetolactate + NADPH + H(+). It carries out the reaction (2R,3R)-2,3-dihydroxy-3-methylpentanoate + NADP(+) = (S)-2-ethyl-2-hydroxy-3-oxobutanoate + NADPH + H(+). The protein operates within amino-acid biosynthesis; L-isoleucine biosynthesis; L-isoleucine from 2-oxobutanoate: step 2/4. It participates in amino-acid biosynthesis; L-valine biosynthesis; L-valine from pyruvate: step 2/4. Functionally, involved in the biosynthesis of branched-chain amino acids (BCAA). Catalyzes an alkyl-migration followed by a ketol-acid reduction of (S)-2-acetolactate (S2AL) to yield (R)-2,3-dihydroxy-isovalerate. In the isomerase reaction, S2AL is rearranged via a Mg-dependent methyl migration to produce 3-hydroxy-3-methyl-2-ketobutyrate (HMKB). In the reductase reaction, this 2-ketoacid undergoes a metal-dependent reduction by NADPH to yield (R)-2,3-dihydroxy-isovalerate. This chain is Ketol-acid reductoisomerase (NADP(+)), found in Cupriavidus necator (strain ATCC 17699 / DSM 428 / KCTC 22496 / NCIMB 10442 / H16 / Stanier 337) (Ralstonia eutropha).